Consider the following 662-residue polypeptide: UPF0313 protein CPR_1216 (662 aa).

The 272-residue stretch at 296–567 folds into the Radical SAM core domain; it reads AIEEVKFSLV…AMQRALLQFK (272 aa). Positions 310, 314, and 317 each coordinate [4Fe-4S] cluster. The interval 597 to 662 is disordered; the sequence is RDKNSFGKGN…QRVSKGKKRR (66 aa). Positions 618-632 are enriched in basic and acidic residues; that stretch reads SRNENSGRRESEDKK. A compositionally biased stretch (basic residues) spans 633–644; it reads RSSHSKKQRGNK.

The protein belongs to the UPF0313 family. It depends on [4Fe-4S] cluster as a cofactor.

This chain is UPF0313 protein CPR_1216, found in Clostridium perfringens (strain SM101 / Type A).